The primary structure comprises 181 residues: Acireductone dioxygenase (181 aa).

Over residues 1–10 (MRAYIYDEES) the composition is skewed to acidic residues. Residues 1–23 (MRAYIYDEESQLSPQDEHESSQS) are disordered. The Fe(2+) site is built by His-82, His-84, Glu-88, and His-128. The Ni(2+) site is built by His-82, His-84, Glu-88, and His-128.

It belongs to the acireductone dioxygenase (ARD) family. It depends on Fe(2+) as a cofactor. Ni(2+) is required as a cofactor.

The protein resides in the cytoplasm. It is found in the nucleus. It catalyses the reaction 1,2-dihydroxy-5-(methylsulfanyl)pent-1-en-3-one + O2 = 4-methylsulfanyl-2-oxobutanoate + formate + 2 H(+). The catalysed reaction is 1,2-dihydroxy-5-(methylsulfanyl)pent-1-en-3-one + O2 = 3-(methylsulfanyl)propanoate + CO + formate + 2 H(+). It participates in amino-acid biosynthesis; L-methionine biosynthesis via salvage pathway; L-methionine from S-methyl-5-thio-alpha-D-ribose 1-phosphate: step 5/6. Catalyzes 2 different reactions between oxygen and the acireductone 1,2-dihydroxy-3-keto-5-methylthiopentene (DHK-MTPene) depending upon the metal bound in the active site. Fe-containing acireductone dioxygenase (Fe-ARD) produces formate and 2-keto-4-methylthiobutyrate (KMTB), the alpha-ketoacid precursor of methionine in the methionine recycle pathway. Ni-containing acireductone dioxygenase (Ni-ARD) produces methylthiopropionate, carbon monoxide and formate, and does not lie on the methionine recycle pathway. The protein is Acireductone dioxygenase of Puccinia graminis f. sp. tritici (strain CRL 75-36-700-3 / race SCCL) (Black stem rust fungus).